We begin with the raw amino-acid sequence, 718 residues long: MQRRTRGASSLRLARCLTPANLIRGDNAGVPERRIFGGCLLPTPEGLLSAAVGALRQRSDDAQPAFLTCTDRSVRLAARQHNTVPESLIVDGLASDPHYEYIRHYASAATQALGEVELPGGQLSRAILTQYWKYLQTVVPSGLDVPEDPVGDCDPSLHVLLRPTLAPKLLARTPFKSGAVAAKYAATVAGLRDALHRIQQYMFFMRPADPSRPSTDTALRLNELLAYVSVLYRWASWMLWTTDKHVCHRLSPSNRRFLPLGGSPEAPAETFARHLDRGPSGTTGSMQCMALRAAVSDVLGHLTRLANLWQTGKRSGGTYGTVDTVVSTVEVLSIVHHHAQYIINATLTGYGVWATDSLNNEYLRAAVDSQERFCRTTAPLFPTMTAPSWARMELSIKAWFGAALAADLLRNGAPSLHYESILRLVASRRTTWSAGPPPDDMASGPGGHRAGGGTCREKIQRARRDNEPPPLPRPRLHSTPASTRRFRRRRADGAGPPLPDANDPVAEPPAAATQPATYYTHMGEVPPRLPARNVAGPDRRPPAATCPLLVRRASLGSLDRPRVWGPAPEGEPDQMEATYLTADDDDDDARRKATHAASARERHAPYEDDESIYETVSEDGGRVYEEIPWMRVYENVCVNTANAAPASPYIEAENPLYDWGGSALFSPPGRTGPPPPPLSPSPVLARHRANALTNDGPTNVAALSALLTKLKREGRRSR.

2 disordered regions span residues 433–510 and 581–611; these read SAGP…EPPA and TADD…DDES. Over residues 444 to 454 the composition is skewed to gly residues; that stretch reads GPGGHRAGGGT. The span at 455–467 shows a compositional bias: basic and acidic residues; that stretch reads CREKIQRARRDNE.

Belongs to the herpesviridae HHV-1 VP11/12 protein family. Interacts with VP16. Interacts with host LCK, PIK3R1, SHC1 AND GRB2; these interactions promote the activation of the PI3K/AKT pathway. Interacts with host YWHAB. Interacts with ICP0; this interaction targets UL46 for degradation by the proteasome. Interacts (via N-terminus) with host TMEM173. Interacts (via C-terminus) with host TBK1. Interacts with host DOK2. Post-translationally, phosphorylated by host LCK. The phosphorylation seems to be lymphocyte-specific.

The protein resides in the virion tegument. Its subcellular location is the host cytoplasm. It localises to the host cell membrane. Functionally, plays a role in the activation of the host PI3K/AKT pathway to promote cell survival. Interacts with and activates host LCK and thereby recruits downstream partners SHC1, GRB2 and PI3KR1 in order to activate the PI3K pathway by phosphorylating host AKT on its activating residues. This mechanism is inhibited by the viral protein US3 that instead promotes incorporation of UL46 into virions. Plays a role in the inhibition of TMEM173/STING-mediated type I interferon production. Interacts with host DOK2 and induces its degradation. This immune evasion mechanism to inactivate T-cells may play an important role during pathogenesis. The protein is Tegument protein UL46 of Homo sapiens (Human).